Here is a 1042-residue protein sequence, read N- to C-terminus: Probable serine/threonine protein kinase IRE4 (1042 aa).

3 stretches are compositionally biased toward basic and acidic residues: residues 1–10 (MAEENRKDRG), 102–115 (EEIK…GKDE), and 314–327 (QRNE…RRDK). 3 disordered regions span residues 1 to 75 (MAEE…GTKL), 90 to 115 (PPKY…GKDE), and 297 to 327 (WGST…RRDK). The C2H2-type; atypical zinc-finger motif lies at 402–421 (CRICEEEVPLFHLEPHSYIC). Residues 670 to 955 (FEIIKPISRG…AAEVKSHPFF (286 aa)) enclose the Protein kinase domain. ATP-binding positions include 676–684 (ISRGAFGKV) and lysine 699. Catalysis depends on aspartate 793, which acts as the Proton acceptor. The segment at 830-850 (ESDVSPRTNSHHFQKNQEEER) is disordered. A Phosphoserine modification is found at serine 854. An AGC-kinase C-terminal domain is found at 956 to 1042 (QGVDWENLAL…KLFFLLLCVF (87 aa)).

This sequence belongs to the protein kinase superfamily. AGC Ser/Thr protein kinase family.

The catalysed reaction is L-seryl-[protein] + ATP = O-phospho-L-seryl-[protein] + ADP + H(+). It catalyses the reaction L-threonyl-[protein] + ATP = O-phospho-L-threonyl-[protein] + ADP + H(+). The chain is Probable serine/threonine protein kinase IRE4 from Arabidopsis thaliana (Mouse-ear cress).